Reading from the N-terminus, the 407-residue chain is Acetate kinase (407 aa).

A Mg(2+)-binding site is contributed by Asn-10. Lys-17 contacts ATP. A substrate-binding site is contributed by Arg-93. Asp-150 serves as the catalytic Proton donor/acceptor. Residues 210 to 214 (HLGNG), 284 to 286 (DMR), and 332 to 336 (GVGEN) contribute to the ATP site. Glu-386 lines the Mg(2+) pocket.

This sequence belongs to the acetokinase family. Homodimer. Mg(2+) is required as a cofactor. Requires Mn(2+) as cofactor.

The protein resides in the cytoplasm. It catalyses the reaction acetate + ATP = acetyl phosphate + ADP. Its pathway is metabolic intermediate biosynthesis; acetyl-CoA biosynthesis; acetyl-CoA from acetate: step 1/2. Functionally, catalyzes the formation of acetyl phosphate from acetate and ATP. Can also catalyze the reverse reaction. In Streptomyces coelicolor (strain ATCC BAA-471 / A3(2) / M145), this protein is Acetate kinase.